The sequence spans 104 residues: Phosphate metabolism protein 6 (104 aa).

The chain crosses the membrane as a helical span at residues 76-96 (IIVIIIVLLLYSLTMVGLFYV).

The protein localises to the vacuole membrane. The sequence is that of Phosphate metabolism protein 6 (PHM6) from Saccharomyces cerevisiae (strain ATCC 204508 / S288c) (Baker's yeast).